Here is a 362-residue protein sequence, read N- to C-terminus: Putative membrane-bound acyltransferase YfiQ (362 aa).

10 helical membrane-spanning segments follow: residues 11–31 (CISC…MLQA), 44–64 (FRTL…FLLA), 82–102 (VIFV…TSAM), 119–139 (VFLG…YMLH), 153–173 (WVLS…SAAS), 181–201 (GGAF…FCLA), 220–240 (WVVY…SYVG), 252–267 (IMLY…FHLF), 283–303 (YSFS…VLLL), and 308–328 (IPAV…PIMT).

This sequence belongs to the acyltransferase 3 family.

The protein resides in the cell membrane. The protein is Putative membrane-bound acyltransferase YfiQ (yfiQ) of Bacillus subtilis (strain 168).